The following is a 176-amino-acid chain: Ribosome maturation factor RimM (176 aa).

In terms of domain architecture, PRC barrel spans 100 to 172; it reads PDTYYDHQLV…IVEIDPPHGL (73 aa).

The protein belongs to the RimM family. In terms of assembly, binds ribosomal protein uS19.

It localises to the cytoplasm. In terms of biological role, an accessory protein needed during the final step in the assembly of 30S ribosomal subunit, possibly for assembly of the head region. Essential for efficient processing of 16S rRNA. May be needed both before and after RbfA during the maturation of 16S rRNA. It has affinity for free ribosomal 30S subunits but not for 70S ribosomes. The protein is Ribosome maturation factor RimM of Mycobacterium bovis (strain ATCC BAA-935 / AF2122/97).